The following is a 423-amino-acid chain: Probable M18 family aminopeptidase 2 (423 aa).

Residues histidine 84, histidine 157, and histidine 397 each coordinate Zn(2+).

Belongs to the peptidase M18 family. Zn(2+) is required as a cofactor.

In Borreliella burgdorferi (strain ATCC 35210 / DSM 4680 / CIP 102532 / B31) (Borrelia burgdorferi), this protein is Probable M18 family aminopeptidase 2 (apeB).